The following is a 466-amino-acid chain: MDVPRPAFKCFDDDGRLKRSGTVWTASAHIITAVIGSGVLSLAWAIGQLGWIAGPTVMLLFSFVTYYSSTLLSDCYRTGDPVSGKRNYTYMDAVRSILGGFRFKICGLIQYLNLFGITVGYTIAASISMMAIKRSNCFHESGGKNPCHMSSNPYMIMFGVTEILLSQIKDFDQIWWLSIVAAIMSFTYSAIGLALGIIQVAANGVVKGSLTGISIGAVTQTQKIWRTFQALGDIAFAYSYSVVLIEIQDTVRSPPAESKTMKIATRISIAVTTTFYMLCGCMGYAAFGDKAPGNLLTGFGFYNPFWLLDVANAAIVIHLVGAYQVFAQPIFAFIEKQAAARFPDSDLVTKEYEIRIPGFRSPYKVNVFRAVYRSGFVVLTTVISMLMPFFNDVVGILGALGFWPLTVYFPVEMYIRQRKVERWSMKWVCLQMLSCGCLMITLVAGVGSIAGVMLDLKVYKPFKTTY.

The Cytoplasmic segment spans residues M1–T22. The next 2 helical transmembrane spans lie at V23–A43 and W44–V64. Over T65 to Y111 the chain is Cytoplasmic. The helical transmembrane segment at L112–I132 threads the bilayer. Residues K133 to L177 lie on the Extracellular side of the membrane. Residues S178–I198 form a helical membrane-spanning segment. The Cytoplasmic segment spans residues Q199 to R226. Residues T227–I247 form a helical membrane-spanning segment. Over Q248–R266 the chain is Extracellular. Residues I267–F287 traverse the membrane as a helical segment. The Cytoplasmic portion of the chain corresponds to G288–K290. Residues A291 to A311 form a helical membrane-spanning segment. Residues N312–A313 are Extracellular-facing. Residues A314–I334 form a helical membrane-spanning segment. Topologically, residues E335–R369 are cytoplasmic. Residues A370–F390 traverse the membrane as a helical segment. Residues N391–D392 lie on the Extracellular side of the membrane. The chain crosses the membrane as a helical span at residues V393–M413. At Y414–C435 the chain is on the cytoplasmic side. Residues G436–L456 traverse the membrane as a helical segment. Residues K457–Y466 lie on the Extracellular side of the membrane.

This sequence belongs to the amino acid/polyamine transporter 2 family. Amino acid/auxin permease (AAAP) (TC 2.A.18.2) subfamily. As to expression, expressed in leaves, stems and flowers.

Its subcellular location is the cell membrane. Inhibited by 2,4-dinitrophenol. Functionally, amino acid-proton symporter. Stereospecific transporter with a broad specificity for neutral amino acids, favoring small amino acids such as alanine, asparagine and glutamine. Also accepts large aromatic residues such as in phenlalanine or tyrosine. The protein is Amino acid permease 4 (AAP4) of Arabidopsis thaliana (Mouse-ear cress).